The chain runs to 267 residues: Cytokinesis defective protein 7 (267 aa).

The disordered stretch occupies residues 244 to 267 (RNQADQSILPPSGDQQHHRSELHA). Over residues 258–267 (QQHHRSELHA) the composition is skewed to basic and acidic residues.

The sequence is that of Cytokinesis defective protein 7 from Caenorhabditis elegans.